A 404-amino-acid chain; its full sequence is G1/S-specific cyclin-E2 (404 aa).

A disordered region spans residues 1–41 (MSRRSSRLQAKQHAQPNQPDSPQETQIIQAKKRKTAQDVKK). The span at 7-28 (RLQAKQHAQPNQPDSPQETQII) shows a compositional bias: polar residues. S21 carries the phosphoserine modification. K348 is subject to N6-lactoyllysine. S383 is subject to Phosphoserine. The residue at position 392 (T392) is a Phosphothreonine.

Belongs to the cyclin family. Cyclin E subfamily. As to quaternary structure, interacts with the CDK2 (in vivo) and CDK3 (in vitro) protein kinases to form a serine/threonine kinase holoenzyme complex. The cyclin subunit imparts substrate specificity to the complex. In terms of processing, phosphorylation by CDK2 triggers its release from CDK2 and degradation via the ubiquitin proteasome pathway. Post-translationally, lactylated at Lys-348. Delactylated by SIRT3. Highest levels in adult testis, thymus and brain. Lower levels in placenta, spleen and colon.

The protein localises to the nucleus. Its function is as follows. Essential for the control of the cell cycle at the late G1 and early S phase. The protein is G1/S-specific cyclin-E2 (Ccne2) of Mus musculus (Mouse).